The sequence spans 222 residues: Charged multivesicular body protein 3 (222 aa).

G2 is lipidated: N-myristoyl glycine. Residues 2-113 form an intramolecular interaction with C-terminus region; that stretch reads GLFGKTQEKP…LQKSTEVMKA (112 aa). Residues 22-54 adopt a coiled-coil conformation; it reads KIRKEMRVVDRQIRDIQREEEKVKRSVKDAAKK. 2 important for autoinhibitory function regions span residues 59–64 and 168–169; these read VCVVLA and IL. Positions 149-222 form a coiled coil; it reads ESMDDQEEME…MQSRLATLRS (74 aa). The interval 151–220 is intramolecular interaction with N-terminus; sequence MDDQEEMEEA…EAMQSRLATL (70 aa). The interval 151 to 222 is interaction with VPS4A; sequence MDDQEEMEEA…MQSRLATLRS (72 aa). K179 is covalently cross-linked (Glycyl lysine isopeptide (Lys-Gly) (interchain with G-Cter in ubiquitin)). The disordered stretch occupies residues 180-222; it reads APSKVTDALPEPEPSGAMAASDEEEEEEEALEAMQSRLATLRS. Interaction with STAMBP regions lie at residues 196 to 222, 203 to 207, and 221 to 222; these read AMAA…TLRS, EEEEE, and RS. At S200 the chain carries Phosphoserine. Residues 200–210 show a composition bias toward acidic residues; sequence SDEEEEEEEAL. The short motif at 201–211 is the MIT-interacting motif element; sequence DEEEEEEEALE.

Belongs to the SNF7 family. Probable core component of the endosomal sorting required for transport complex III (ESCRT-III). ESCRT-III components are thought to multimerize to form a flat lattice on the perimeter membrane of the endosome. Several assembly forms of ESCRT-III may exist that interact and act sequentially. Forms a metastable monomer in solution; its core structure (without part of the putative autoinhibitory C-terminal acidic region) oligomerizes into a flat lattice via two different dimerization interfaces. In vitro, heteromerizes with CHMP2A (but not CHMP4) to form helical tubular structures that expose membrane-interacting sites on the outside whereas VPS4B can associate on the inside of the tubule. May interact with IGFBP7; the relevance of such interaction however remains unclear. Interacts with CHMP2A. Interacts with CHMP4A; the interaction requires the release of CHMP4A autoinhibition. Interacts with VPS4A. Interacts with STAMBP; the interaction appears to relieve the autoinhibition of CHMP3. Interacts with VTA1.

It is found in the cytoplasm. Its subcellular location is the cytosol. The protein localises to the membrane. The protein resides in the endosome. It localises to the late endosome membrane. Its function is as follows. Probable core component of the endosomal sorting required for transport complex III (ESCRT-III) which is involved in multivesicular bodies (MVBs) formation and sorting of endosomal cargo proteins into MVBs. MVBs contain intraluminal vesicles (ILVs) that are generated by invagination and scission from the limiting membrane of the endosome and mostly are delivered to lysosomes enabling degradation of membrane proteins, such as stimulated growth factor receptors, lysosomal enzymes and lipids. The MVB pathway appears to require the sequential function of ESCRT-O, -I,-II and -III complexes. ESCRT-III proteins mostly dissociate from the invaginating membrane before the ILV is released. The ESCRT machinery also functions in topologically equivalent membrane fission events, such as the terminal stages of cytokinesis and the budding of enveloped viruses (lentiviruses). ESCRT-III proteins are believed to mediate the necessary vesicle extrusion and/or membrane fission activities, possibly in conjunction with the AAA ATPase VPS4. Selectively binds to phosphatidylinositol 3,5-bisphosphate PtdIns(3,5)P2 and PtdIns(3,4)P2 in preference to other phosphoinositides tested. Involved in late stages of cytokinesis. Plays a role in endosomal sorting/trafficking of EGF receptor. This Macaca fascicularis (Crab-eating macaque) protein is Charged multivesicular body protein 3 (CHMP3).